A 232-amino-acid chain; its full sequence is Thrombin-like enzyme BjussuSP-1 (232 aa).

Residues 1-223 (VLGGDECDIN…YTDWIQRNIA (223 aa)) enclose the Peptidase S1 domain. 6 cysteine pairs are disulfide-bonded: cysteine 7–cysteine 138, cysteine 25–cysteine 41, cysteine 73–cysteine 230, cysteine 117–cysteine 184, cysteine 149–cysteine 163, and cysteine 174–cysteine 199. Catalysis depends on histidine 40, which acts as the Charge relay system. Residue asparagine 77 is glycosylated (N-linked (GlcNAc...) asparagine). Aspartate 85 serves as the catalytic Charge relay system. N-linked (GlcNAc...) asparagine glycosylation is present at asparagine 129. Serine 178 acts as the Charge relay system in catalysis.

The protein belongs to the peptidase S1 family. Snake venom subfamily. Monomer. N-glycosylated. Contains sialic acid residues. Deglycosylation reduces in 50% the formation of fibrin clot. Expressed by the venom gland.

Its subcellular location is the secreted. Inhibited by leupeptin, heparin, and 1.10-phenantroline. In terms of biological role, thrombin-like enzyme that shows clotting activity upon human plasma. Shows specific fibrinogenolytic activity for Aalpha chain (FGA). Hydrolyzes fibrin, BAPNA and TAME, as well as chromogenic artificial substrates of the blood coagulation cascasde: S-27654 for factor X (F10), S-2302 for kallikrein (KLK), factor XIa (F11), and XIIa (F12), and S-2266 for kallikrein and factor XIa (F11). Subcutaneous injection into mice induces a mild edema. Intravenous and intramuscular injection reduce plasma fibrinogen concentration and increase the levels of fibrin(ogen) degradation products. Intramuscular injection also promotes an increase in the expression of proMMP-9, but is unable to activate it. This chain is Thrombin-like enzyme BjussuSP-1, found in Bothrops jararacussu (Jararacussu).